The sequence spans 347 residues: uncharacterized protein (347 aa).

Coiled coils occupy residues 148–201 and 261–298; these read DQQS…EKDG and LENL…DTFS. The tract at residues 151–203 is disordered; the sequence is SISNLRKEEKEKQKENENENENENENENENEKENQELDKKVNQTNDNEKDGDE. The span at 155–167 shows a compositional bias: basic and acidic residues; that stretch reads LRKEEKEKQKENE. Over residues 168 to 178 the composition is skewed to acidic residues; it reads NENENENENEN. Basic and acidic residues predominate over residues 179–191; it reads ENEKENQELDKKV.

This is an uncharacterized protein from Dictyostelium discoideum (Social amoeba).